The chain runs to 157 residues: Putative pre-16S rRNA nuclease (157 aa).

Belongs to the YqgF nuclease family.

The protein resides in the cytoplasm. Its function is as follows. Could be a nuclease involved in processing of the 5'-end of pre-16S rRNA. The polypeptide is Putative pre-16S rRNA nuclease (Anaplasma marginale (strain St. Maries)).